The following is a 210-amino-acid chain: Glycerol-3-phosphate acyltransferase 2 (210 aa).

The next 6 membrane-spanning stretches (helical) occupy residues 4 to 24 (LIMV…PAPY), 54 to 74 (FWPG…AMAV), 82 to 102 (LGIQ…PVWL), 114 to 134 (IGIL…CFLV), 141 to 161 (FPTL…WLGQ), and 163 to 183 (DLGK…MYIP).

It belongs to the PlsY family. In terms of assembly, probably interacts with PlsX.

Its subcellular location is the cell membrane. It catalyses the reaction an acyl phosphate + sn-glycerol 3-phosphate = a 1-acyl-sn-glycero-3-phosphate + phosphate. The protein operates within lipid metabolism; phospholipid metabolism. Functionally, catalyzes the transfer of an acyl group from acyl-phosphate (acyl-PO(4)) to glycerol-3-phosphate (G3P) to form lysophosphatidic acid (LPA). This enzyme utilizes acyl-phosphate as fatty acyl donor, but not acyl-CoA or acyl-ACP. The polypeptide is Glycerol-3-phosphate acyltransferase 2 (Dehalococcoides mccartyi (strain ATCC BAA-2266 / KCTC 15142 / 195) (Dehalococcoides ethenogenes (strain 195))).